The sequence spans 418 residues: Ras association domain-containing protein 5 (418 aa).

A disordered region spans residues 1–118 (MAMASPAIGQ…QPQDPRVPAE (118 aa)). A2 carries the N-acetylthreonine modification. Residues 77–89 (SRPARPLRPGLQQ) are compositionally biased toward low complexity. A Phorbol-ester/DAG-type zinc finger spans residues 122-170 (GHCFAELVLPGGPGWCDLCGREVLRQALRCTNCKFTCHPECRSLIQLDC). A phosphoserine mark is found at S182 and S279. The 91-residue stretch at 274 to 364 (TDKRTSFYLP…LSFVLKENET (91 aa)) folds into the Ras-associating domain. Position 352 is a phosphothreonine (T352). In terms of domain architecture, SARAH spans 366 to 413 (EVEWDAFSIPELQNFLTILEKEEQDKIQQVQKKYDKFRQKLEEALRES).

Interacts directly with activated HRAS; a RASSF5-STK4/MST1 complex probably associates with activated HRAS. Interacts with KRAS. Probably interacts with Ras-like GTPases RRAS, MRAS, RAP1B, RAP2A and RALA. Interacts with RRAS2. Can self-associate. Interacts with RSSF1 isoform A. The RSSF1 isoform A-RSSF5 heterodimer probably mediates the association of RSSF1 with HRAS. Isoform 2 interacts with activated RAP1A and ITGAL/LFA-1. Binds STK4/MST1, inhibiting STK4/MST1 autoactivation. Widely expressed. Frequently down-regulated in lung tumor cell lines and primary lung tumors.

The protein resides in the cytoplasm. Its subcellular location is the cytoskeleton. Potential tumor suppressor. Seems to be involved in lymphocyte adhesion by linking RAP1A activation upon T-cell receptor or chemokine stimulation to integrin activation. Isoform 2 stimulates lymphocyte polarization and the patch-like distribution of ITGAL/LFA-1, resulting in an enhanced adhesion to ICAM1. Together with RAP1A may participate in regulation of microtubule growth. The association of isoform 2 with activated RAP1A is required for directional movement of endothelial cells during wound healing. May be involved in regulation of Ras apoptotic function. The RASSF5-STK4/MST1 complex may mediate HRAS and KRAS induced apoptosis. This chain is Ras association domain-containing protein 5 (RASSF5), found in Homo sapiens (Human).